The chain runs to 88 residues: UPF0237 protein spr0217 (88 aa).

Residues 4 to 77 (IITVVGKDKS…QTLNVKINIQ (74 aa)) enclose the ACT domain.

This sequence belongs to the UPF0237 family. As to quaternary structure, homodimer.

This chain is UPF0237 protein spr0217, found in Streptococcus pneumoniae (strain ATCC BAA-255 / R6).